Reading from the N-terminus, the 314-residue chain is NAD-dependent protein lipoamidase sirtuin-4, mitochondrial (314 aa).

The transit peptide at 1 to 28 (MKMSFALTFRSAKGRWIANPSQPCSKAS) directs the protein to the mitochondrion. Positions 37 to 314 (PPLDPEKVKE…GELLPLIDPC (278 aa)) constitute a Deacetylase sirtuin-type domain. NAD(+) contacts are provided by residues 62–82 (GAGI…VGLY) and 143–146 (QNVD). Histidine 161 (proton acceptor) is an active-site residue. Positions 169, 172, 220, and 223 each coordinate Zn(2+). Residues 260-262 (GSS), 286-288 (NIG), and cysteine 304 each bind NAD(+).

It belongs to the sirtuin family. Class II subfamily. As to quaternary structure, interacts with GLUD1, IDE and SLC25A5. Interacts with DLAT and PDHX. Interacts with MCCC1 (via the biotin carboxylation domain). Interacts with PCCA and PC. Zn(2+) is required as a cofactor. In terms of tissue distribution, detected in vascular smooth muscle and striated muscle. Detected in insulin-producing beta-cells in pancreas islets of Langerhans (at protein level). Widely expressed. Weakly expressed in leukocytes and fetal thymus.

It is found in the mitochondrion matrix. The enzyme catalyses N(6)-[(R)-lipoyl]-L-lysyl-[protein] + NAD(+) + H2O = 2''-O-lipoyl-ADP-D-ribose + nicotinamide + L-lysyl-[protein]. It carries out the reaction N(6)-biotinyl-L-lysyl-[protein] + NAD(+) + H2O = 2''-O-biotinyl-ADP-D-ribose + nicotinamide + L-lysyl-[protein]. The catalysed reaction is N(6)-acetyl-L-lysyl-[protein] + NAD(+) + H2O = 2''-O-acetyl-ADP-D-ribose + nicotinamide + L-lysyl-[protein]. It catalyses the reaction L-cysteinyl-[protein] + NAD(+) = S-(ADP-D-ribosyl)-L-cysteinyl-[protein] + nicotinamide + H(+). Functionally, acts as a NAD-dependent protein lipoamidase, biotinylase, deacetylase and ADP-ribosyl transferase. Catalyzes more efficiently removal of lipoyl- and biotinyl- than acetyl-lysine modifications. Inhibits the pyruvate dehydrogenase complex (PDH) activity via the enzymatic hydrolysis of the lipoamide cofactor from the E2 component, DLAT, in a phosphorylation-independent manner. Catalyzes the transfer of ADP-ribosyl groups onto target proteins, including mitochondrial GLUD1, inhibiting GLUD1 enzyme activity. Acts as a negative regulator of mitochondrial glutamine metabolism by mediating mono ADP-ribosylation of GLUD1: expressed in response to DNA damage and negatively regulates anaplerosis by inhibiting GLUD1, leading to block metabolism of glutamine into tricarboxylic acid cycle and promoting cell cycle arrest. In response to mTORC1 signal, SIRT4 expression is repressed, promoting anaplerosis and cell proliferation. Acts as a tumor suppressor. Also acts as a NAD-dependent protein deacetylase: mediates deacetylation of 'Lys-471' of MLYCD, inhibiting its activity, thereby acting as a regulator of lipid homeostasis. Does not seem to deacetylate PC. Controls fatty acid oxidation by inhibiting PPARA transcriptional activation. Impairs SIRT1-PPARA interaction probably through the regulation of NAD(+) levels. Down-regulates insulin secretion. The sequence is that of NAD-dependent protein lipoamidase sirtuin-4, mitochondrial from Homo sapiens (Human).